Consider the following 178-residue polypeptide: ATP synthase subunit delta (178 aa).

Belongs to the ATPase delta chain family. As to quaternary structure, F-type ATPases have 2 components, F(1) - the catalytic core - and F(0) - the membrane proton channel. F(1) has five subunits: alpha(3), beta(3), gamma(1), delta(1), epsilon(1). F(0) has three main subunits: a(1), b(2) and c(10-14). The alpha and beta chains form an alternating ring which encloses part of the gamma chain. F(1) is attached to F(0) by a central stalk formed by the gamma and epsilon chains, while a peripheral stalk is formed by the delta and b chains.

It is found in the cell membrane. F(1)F(0) ATP synthase produces ATP from ADP in the presence of a proton or sodium gradient. F-type ATPases consist of two structural domains, F(1) containing the extramembraneous catalytic core and F(0) containing the membrane proton channel, linked together by a central stalk and a peripheral stalk. During catalysis, ATP synthesis in the catalytic domain of F(1) is coupled via a rotary mechanism of the central stalk subunits to proton translocation. In terms of biological role, this protein is part of the stalk that links CF(0) to CF(1). It either transmits conformational changes from CF(0) to CF(1) or is implicated in proton conduction. In Streptococcus pyogenes serotype M3 (strain ATCC BAA-595 / MGAS315), this protein is ATP synthase subunit delta.